Consider the following 201-residue polypeptide: FMN-dependent NADH:quinone oxidoreductase (201 aa).

FMN-binding positions include serine 10, 16-18 (SQS), 96-99 (MYNF), and 140-143 (SRGG).

Belongs to the azoreductase type 1 family. As to quaternary structure, homodimer. FMN is required as a cofactor.

The catalysed reaction is 2 a quinone + NADH + H(+) = 2 a 1,4-benzosemiquinone + NAD(+). It catalyses the reaction N,N-dimethyl-1,4-phenylenediamine + anthranilate + 2 NAD(+) = 2-(4-dimethylaminophenyl)diazenylbenzoate + 2 NADH + 2 H(+). In terms of biological role, quinone reductase that provides resistance to thiol-specific stress caused by electrophilic quinones. Functionally, also exhibits azoreductase activity. Catalyzes the reductive cleavage of the azo bond in aromatic azo compounds to the corresponding amines. This is FMN-dependent NADH:quinone oxidoreductase from Shigella flexneri serotype 5b (strain 8401).